The primary structure comprises 360 residues: Protein Wnt-2 (360 aa).

Residues 1–26 form the signal peptide; it reads MNAPLGGIWLWLPLLLTWLTPEVSSS. 11 disulfide bridges follow: cysteine 76-cysteine 87, cysteine 127-cysteine 135, cysteine 137-cysteine 157, cysteine 206-cysteine 220, cysteine 208-cysteine 215, cysteine 278-cysteine 309, cysteine 294-cysteine 304, cysteine 308-cysteine 348, cysteine 324-cysteine 339, cysteine 326-cysteine 336, and cysteine 331-cysteine 332. A lipid anchor (O-palmitoleoyl serine; by PORCN) is attached at serine 212. Asparagine 295 carries N-linked (GlcNAc...) asparagine glycosylation.

The protein belongs to the Wnt family. In terms of processing, palmitoleoylation is required for efficient binding to frizzled receptors. Depalmitoleoylation leads to Wnt signaling pathway inhibition.

The protein localises to the secreted. It localises to the extracellular space. Its subcellular location is the extracellular matrix. Functionally, ligand for members of the frizzled family of seven transmembrane receptors. Probable developmental protein. May be a signaling molecule which affects the development of discrete regions of tissues. Is likely to signal over only few cell diameters. This Eulemur macaco macaco (Black lemur) protein is Protein Wnt-2 (WNT2).